Reading from the N-terminus, the 364-residue chain is Fructose-bisphosphate aldolase B (364 aa).

N-acetylalanine is present on alanine 2. Lysine 13 bears the N6-succinyllysine mark. Serine 36 bears the Phosphoserine mark. Threonine 39 bears the Phosphothreonine mark. Arginine 43 contacts beta-D-fructose 1,6-bisphosphate. Serine 89 carries the phosphoserine modification. Threonine 119 carries the post-translational modification Phosphothreonine. N6-succinyllysine is present on lysine 121. Position 132 is a phosphoserine (serine 132). The active-site Proton acceptor is the glutamate 188. Catalysis depends on lysine 230, which acts as the Schiff-base intermediate with dihydroxyacetone-P. Phosphoserine is present on residues serine 272, serine 276, serine 299, and serine 301. Residue 272–274 participates in beta-D-fructose 1,6-bisphosphate binding; the sequence is SGG. Position 304 (arginine 304) interacts with beta-D-fructose 1,6-bisphosphate. Serine 309 is subject to Phosphoserine. The residue at position 317 (lysine 317) is an N6-succinyllysine.

The protein belongs to the class I fructose-bisphosphate aldolase family. Homotetramer. Interacts with BBS1, BBS2, BBS4 and BBS7. Forms a ternary complex with G6PD and TP53; this interaction is direct.

The protein resides in the cytoplasm. The protein localises to the cytosol. It localises to the cytoskeleton. It is found in the microtubule organizing center. Its subcellular location is the centrosome. The protein resides in the centriolar satellite. The catalysed reaction is beta-D-fructose 1,6-bisphosphate = D-glyceraldehyde 3-phosphate + dihydroxyacetone phosphate. It carries out the reaction beta-D-fructose 1-phosphate = D-glyceraldehyde + dihydroxyacetone phosphate. The protein operates within carbohydrate degradation; glycolysis; D-glyceraldehyde 3-phosphate and glycerone phosphate from D-glucose: step 4/4. Its pathway is carbohydrate biosynthesis; gluconeogenesis. It participates in carbohydrate metabolism; fructose metabolism. In terms of biological role, catalyzes the aldol cleavage of fructose 1,6-biphosphate to form two triosephosphates dihydroxyacetone phosphate and D-glyceraldehyde 3-phosphate in glycolysis as well as the reverse stereospecific aldol addition reaction in gluconeogenesis. In fructolysis, metabolizes fructose 1-phosphate derived from the phosphorylation of dietary fructose by fructokinase into dihydroxyacetone phosphate and D-glyceraldehyde. Acts as an adapter independently of its enzymatic activity, exerts a tumor suppressor role by stabilizing the ternary complex with G6PD and TP53 to inhibit G6PD activity and keep oxidative pentose phosphate metabolism in check. The sequence is that of Fructose-bisphosphate aldolase B from Homo sapiens (Human).